Reading from the N-terminus, the 252-residue chain is MLLAVDIGNTSTALGLFSGEELIAHFRIHTDRMRMESEYRVILKNLFALEDLPPPKAALLASVVPPVEREMKRAIERLFGVEARVVEAADTGLEVLIDNPREAGADRLVNAVGALAYPSPTGRYIVVDFGTATTFDLVEAPNRYLGGAIAIGPQTAADALAQRTAKLPRIDLTPPKAAVGKNTLEALRSGLVLGYAALVEGMVRRFKEEAGEALVIATGGFAETLRPLCPCFDVVDEDLTLKGLLRIHLGRG.

An ATP-binding site is contributed by 6-13 (DIGNTSTA). 104–107 (GADR) serves as a coordination point for substrate. Asp-106 serves as the catalytic Proton acceptor. Asp-128 is a K(+) binding site. Thr-131 contacts ATP. Position 183 (Thr-183) interacts with substrate.

The protein belongs to the type III pantothenate kinase family. Homodimer. NH4(+) is required as a cofactor. K(+) serves as cofactor.

The protein localises to the cytoplasm. It carries out the reaction (R)-pantothenate + ATP = (R)-4'-phosphopantothenate + ADP + H(+). Its pathway is cofactor biosynthesis; coenzyme A biosynthesis; CoA from (R)-pantothenate: step 1/5. Its function is as follows. Catalyzes the phosphorylation of pantothenate (Pan), the first step in CoA biosynthesis. This is Type III pantothenate kinase from Thermus thermophilus (strain ATCC 27634 / DSM 579 / HB8).